We begin with the raw amino-acid sequence, 335 residues long: Biotin synthase (335 aa).

Residues 51–278 (NTVQLSSLLS…LAKVRLSAGR (228 aa)) enclose the Radical SAM core domain. C66, C70, and C73 together coordinate [4Fe-4S] cluster. [2Fe-2S] cluster contacts are provided by C110, C141, C201, and R273.

Belongs to the radical SAM superfamily. Biotin synthase family. In terms of assembly, homodimer. [4Fe-4S] cluster serves as cofactor. It depends on [2Fe-2S] cluster as a cofactor.

The catalysed reaction is (4R,5S)-dethiobiotin + (sulfur carrier)-SH + 2 reduced [2Fe-2S]-[ferredoxin] + 2 S-adenosyl-L-methionine = (sulfur carrier)-H + biotin + 2 5'-deoxyadenosine + 2 L-methionine + 2 oxidized [2Fe-2S]-[ferredoxin]. The protein operates within cofactor biosynthesis; biotin biosynthesis; biotin from 7,8-diaminononanoate: step 2/2. Its function is as follows. Catalyzes the conversion of dethiobiotin (DTB) to biotin by the insertion of a sulfur atom into dethiobiotin via a radical-based mechanism. The protein is Biotin synthase of Bordetella pertussis (strain Tohama I / ATCC BAA-589 / NCTC 13251).